Consider the following 117-residue polypeptide: Hainantoxin-XV-2 (117 aa).

A signal peptide spans 1–20 (MKLCAVIIASLLVCVAVASS). The segment at 20-55 (SSDNQKEFAQEKEMTREETQSLGEHEKDDEVTGSEE) is disordered. Positions 21–56 (SDNQKEFAQEKEMTREETQSLGEHEKDDEVTGSEER) are excised as a propeptide. Positions 23 to 55 (NQKEFAQEKEMTREETQSLGEHEKDDEVTGSEE) are enriched in basic and acidic residues. 4 disulfides stabilise this stretch: Cys58–Cys72, Cys65–Cys78, Cys69–Cys115, and Cys71–Cys91.

It belongs to the neurotoxin 03 (Tx2) family. 02 subfamily. HNTX-XV sub-subfamily. As to expression, expressed by the venom gland.

It is found in the secreted. Its function is as follows. Putative ion channel inhibitor. In Cyriopagopus hainanus (Chinese bird spider), this protein is Hainantoxin-XV-2.